The primary structure comprises 310 residues: Ribosomal RNA small subunit methyltransferase H (310 aa).

S-adenosyl-L-methionine is bound by residues 47–49 (GGH), D66, F93, D108, and Q115.

Belongs to the methyltransferase superfamily. RsmH family.

Its subcellular location is the cytoplasm. The catalysed reaction is cytidine(1402) in 16S rRNA + S-adenosyl-L-methionine = N(4)-methylcytidine(1402) in 16S rRNA + S-adenosyl-L-homocysteine + H(+). In terms of biological role, specifically methylates the N4 position of cytidine in position 1402 (C1402) of 16S rRNA. This chain is Ribosomal RNA small subunit methyltransferase H, found in Prochlorococcus marinus (strain MIT 9303).